The following is a 408-amino-acid chain: LIN1-like protein (408 aa).

The disordered stretch occupies residues 1 to 161 (MKRTLRNPGN…SVPSSPKRMS (161 aa)). Over residues 41–52 (YYESESEEDEDQ) the composition is skewed to acidic residues. Basic and acidic residues-rich tracts occupy residues 53 to 62 (ILNKEKKEGQ), 73 to 109 (DEKR…KEVL), and 119 to 129 (NGKYSKLRYED). The GYF domain occupies 344-402 (SSQYNFKWEFDDKTYGPYTASQIQAWSNEGYFTDAKHAAFIQLANMDEWMYPNNICFCD).

The protein belongs to the LIN1 family.

The chain is LIN1-like protein from Schizosaccharomyces pombe (strain 972 / ATCC 24843) (Fission yeast).